The following is a 449-amino-acid chain: ATP-dependent protease ATPase subunit HslU (449 aa).

Residues isoleucine 18, 60–65, aspartate 261, glutamate 327, and arginine 399 contribute to the ATP site; that span reads GVGKTE.

Belongs to the ClpX chaperone family. HslU subfamily. As to quaternary structure, a double ring-shaped homohexamer of HslV is capped on each side by a ring-shaped HslU homohexamer. The assembly of the HslU/HslV complex is dependent on binding of ATP.

It localises to the cytoplasm. Its function is as follows. ATPase subunit of a proteasome-like degradation complex; this subunit has chaperone activity. The binding of ATP and its subsequent hydrolysis by HslU are essential for unfolding of protein substrates subsequently hydrolyzed by HslV. HslU recognizes the N-terminal part of its protein substrates and unfolds these before they are guided to HslV for hydrolysis. The chain is ATP-dependent protease ATPase subunit HslU from Oleidesulfovibrio alaskensis (strain ATCC BAA-1058 / DSM 17464 / G20) (Desulfovibrio alaskensis).